We begin with the raw amino-acid sequence, 413 residues long: MNISIESQLINYCLLFFTVVIIPIFYYIYKIVYLYLSHKLRESLINTSARIFKENESFVKQIIFTITDGVGNLRQDIMDHLQYRQTCNSIKYIVDKVFVLIDNISAIYSNTPVENYNYQYCDNITPVQPLGCGAYCPYYQPYDATFNPDCNLNYDTIYNFDFDKDIIKCDNTSECSETNETNKNTSHKLKFEYPKRCRKSRRNSRVFSRNFLKTKKSRENNSKTSTTEPFACTKDETTGMYTIKSNAYDTKNSTETNSDNNSEIVSETNSETNYSTPTTAKVNIDDVLAAMTTVYDKSDFGLNDKIKENVADSLKKMCDSSGNIKVDFDDQKLFKTVFDSVYQGLMTDPSIVDNSGYSSPTNESLNGSLTETLNESLNGSFDNSINNIKETLNKSLMDFIDCPSGSINFSNKN.

Residues 14 to 34 (LLFFTVVIIPIFYYIYKIVYL) form a helical membrane-spanning segment. N-linked (GlcNAc...) asparagine; by host glycans are attached at residues N46, N55, N103, N171, N179, N184, N220, N252, N260, N273, N362, N366, N374, N378, N393, and N408. Over residues 250 to 263 (TKNSTETNSDNNSE) the composition is skewed to low complexity. The disordered stretch occupies residues 250-277 (TKNSTETNSDNNSEIVSETNSETNYSTP). Positions 264 to 277 (IVSETNSETNYSTP) are enriched in polar residues.

Its subcellular location is the membrane. This is an uncharacterized protein from Acanthamoeba polyphaga (Amoeba).